The following is a 663-amino-acid chain: MNKQNNYSDDSIQVLEGLEAVRKRPGMYIGSTDKRGLHHLVYEIVDNSVDEVLNGYGNEIDVTINKDGSISIEDNGRGMPTGIHKSGKPTVEVIFTVLHAGGKFGQGGYKTSGGLHGVGASVVNALSEWLEVEIHRDGNIYHQSFKNGGSPSSGLVKKGKTKKTGTKVTFKPDDTIFKASTSFNFDVLSERLQESAFLLKNLKITLNDLRSGKERQEHYHYEEGIKEFVSYVNEGKEVLHDVATFSGEANGIEVDVAFQYNDQYSESILSFVNNVRTKDGGTHEVGFKTAMTRVFNDYARRINELKTKDKNLDGNDIREGLTAVVSVRIPEELLQFEGQTKSKLGTSEARSAVDSVVADKLPFYLEEKGQLSKSLVKKAIKAQQAREAARKAREDARSGKKNKRKDTLLSGKLTPAQSKNTEKNELYLVEGDSAGGSAKLGRDRKFQAILPLRGKVINTEKARLEDIFKNEEINTIIHTIGAGVGTDFKIEDSNYNRVIIMTDADTDGAHIQVLLLTFFFKYMKPLVQAGRVFIALPPLYKLEKGKGKTKRVEYAWTDEELNKLQKELGKGFTLQRYKGLGEMNPEQLWETTMNPETRTLIRVQVEDEVRSSKRVTTLMGDKVQPRREWIEKHVEFGMQEDQSILDNSEVQVLENDQFDEEEI.

ATP contacts are provided by residues Y7, N47, D74, 114-120, and K341; that span reads GLHGVGA. Positions 386 to 416 are disordered; that stretch reads REAARKAREDARSGKKNKRKDTLLSGKLTPA. Over residues 387–398 the composition is skewed to basic and acidic residues; it reads EAARKAREDARS. The Toprim domain maps to 424 to 538; it reads NELYLVEGDS…AGRVFIALPP (115 aa). Mg(2+) contacts are provided by E430, D503, and D505.

The protein belongs to the type II topoisomerase family. ParE type 2 subfamily. Heterotetramer composed of ParC and ParE. Requires Mg(2+) as cofactor. Mn(2+) is required as a cofactor. It depends on Ca(2+) as a cofactor.

The enzyme catalyses ATP-dependent breakage, passage and rejoining of double-stranded DNA.. Topoisomerase IV is essential for chromosome segregation. It relaxes supercoiled DNA. Performs the decatenation events required during the replication of a circular DNA molecule. The chain is DNA topoisomerase 4 subunit B from Staphylococcus aureus (strain NCTC 8325 / PS 47).